The chain runs to 263 residues: Bidirectional sugar transporter SWEET3 (263 aa).

At 1–7 the chain is on the extracellular side; the sequence is MGDKLRL. A helical membrane pass occupies residues 8-28; it reads SIGILGNGASLLLYTAPIVTF. The MtN3/slv 1 domain occupies 9–97; it reads IGILGNGASL…FIYFYYASPK (89 aa). Residues 29 to 42 are Cytoplasmic-facing; it reads SRVFKKKSTEEFSC. A helical transmembrane segment spans residues 43-63; it reads FPYVMTLFNCLIYTWYGLPIV. The Extracellular portion of the chain corresponds to 64–71; that stretch reads SHLWENLP. The chain crosses the membrane as a helical span at residues 72-92; the sequence is LVTINGVGILLESIFIFIYFY. Residues 93–103 are Cytoplasmic-facing; sequence YASPKEKIKVG. Residues 104-124 form a helical membrane-spanning segment; sequence VTFVPVIVGFGLTTAISALVF. The Extracellular portion of the chain corresponds to 125-132; sequence DDHRHRKS. A helical transmembrane segment spans residues 133-153; the sequence is FVGSVGLVASISMYGSPLVVM. In terms of domain architecture, MtN3/slv 2 spans 133-217; that stretch reads FVGSVGLVAS…ILYFKYKNKK (85 aa). Topologically, residues 154-165 are cytoplasmic; it reads KKVIETRSVEYM. The helical transmembrane segment at 166–186 threads the bilayer; that stretch reads PFYLSFFSFLASSLWLAYGLL. At 187–190 the chain is on the extracellular side; sequence SHDL. Residues 191–211 traverse the membrane as a helical segment; that stretch reads FLASPNMVATPLGILQLILYF. Residues 212–263 lie on the Cytoplasmic side of the membrane; sequence KYKNKKDLAPTTMVITKRNDHDDKNKATLEFVVDVDRNSDTNEKNSNNASSI.

It belongs to the SWEET sugar transporter family. As to quaternary structure, forms heterooligomers with SWEET11, SWEET13 and SWEET17.

Its subcellular location is the cell membrane. Functionally, mediates both low-affinity uptake and efflux of sugar across the plasma membrane. This chain is Bidirectional sugar transporter SWEET3, found in Arabidopsis thaliana (Mouse-ear cress).